Consider the following 625-residue polypeptide: Arginine--tRNA ligase (625 aa).

Positions alanine 117–histidine 127 match the 'HIGH' region motif.

It belongs to the class-I aminoacyl-tRNA synthetase family.

It localises to the cytoplasm. It carries out the reaction tRNA(Arg) + L-arginine + ATP = L-arginyl-tRNA(Arg) + AMP + diphosphate. The protein is Arginine--tRNA ligase of Saccharolobus solfataricus (strain ATCC 35092 / DSM 1617 / JCM 11322 / P2) (Sulfolobus solfataricus).